A 158-amino-acid chain; its full sequence is Class 10 plant pathogenesis-related protein 2B (158 aa).

Aspartate 8 contributes to the trans-zeatin binding site. Ca(2+) contacts are provided by proline 32, valine 35, and isoleucine 38. Positions 60, 69, 81, and 83 each coordinate trans-zeatin. Position 83 (tyrosine 83) interacts with melatonin.

Belongs to the BetVI family.

It localises to the cytoplasm. It is found in the cytosol. Its function is as follows. Class II ribonuclease (RNase). Binds to several cytokinins including natural adenine-type (e.g. trans-zeatin and kinetin) and artificial urea-type (e.g. N,N'-diphenylurea and N-phenyl-N'-(2-chloro-4-pyridyl)urea) hormones. Interacts with melatonin. This is Class 10 plant pathogenesis-related protein 2B from Lupinus luteus (European yellow lupine).